The primary structure comprises 145 residues: Large ribosomal subunit protein uL13 (145 aa).

This sequence belongs to the universal ribosomal protein uL13 family. In terms of assembly, part of the 50S ribosomal subunit.

Its function is as follows. This protein is one of the early assembly proteins of the 50S ribosomal subunit, although it is not seen to bind rRNA by itself. It is important during the early stages of 50S assembly. The chain is Large ribosomal subunit protein uL13 from Staphylococcus haemolyticus (strain JCSC1435).